A 290-amino-acid polypeptide reads, in one-letter code: Arylamine N-acetyltransferase 2 (290 aa).

C68 functions as the Acyl-thioester intermediate in the catalytic mechanism. CoA-binding residues include S103 and G104. 106–107 contacts substrate; the sequence is IH. Active-site residues include H107 and D122. Residue Y208 coordinates CoA.

Belongs to the arylamine N-acetyltransferase family.

It is found in the cytoplasm. The enzyme catalyses an arylamine + acetyl-CoA = an N-acetylarylamine + CoA. It carries out the reaction an N-hydroxyarylamine + acetyl-CoA = an N-acetoxyarylamine + CoA. Its function is as follows. Catalyzes the N- or O-acetylation of various arylamine and heterocyclic amine substrates, and participates in the detoxification of a plethora of hydrazine and arylamine drugs. The sequence is that of Arylamine N-acetyltransferase 2 (NAT2) from Mesocricetus auratus (Golden hamster).